The chain runs to 1502 residues: G patch domain-containing protein 8 (1502 aa).

Positions 40–86 constitute a G-patch domain; it reads SDNIGHRLLQKHGWKLGQGLGKSLQGRTDPIPIVVKYDVMGMGRMEM. Residues 89–124 are a coiled coil; that stretch reads DYAEDATERRRVLEVEKEDTEELRQKYKDYVDKEKA. The C2H2-type zinc-finger motif lies at 136-160; sequence FYCELCDKQYQKHQEFDNHINSYDH. Residues 172–251 form a disordered region; the sequence is REFARNVSSR…GATASCGLGS (80 aa). Basic and acidic residues predominate over residues 182 to 206; the sequence is SRKDEKKQEKALRRLHELAEQRKQA. Over residues 223 to 233 the composition is skewed to acidic residues; the sequence is VDEEGGEDDKD. Residue lysine 311 forms a Glycyl lysine isopeptide (Lys-Gly) (interchain with G-Cter in SUMO2) linkage. Composition is skewed to basic and acidic residues over residues 323–339 and 424–436; these read AEEGTSEDGTKPDEKSS and NTTHPKNAPESKK. Disordered regions lie at residues 323 to 391 and 419 to 541; these read AEEG…ATEP and QMDG…FPVL. Residues 459 to 472 show a composition bias toward polar residues; the sequence is SEVSEQPKETSMTE. Residue lysine 479 is modified to N6-acetyllysine. Serine 491 carries the post-translational modification Phosphoserine. Residues 491 to 519 show a composition bias toward polar residues; the sequence is SDQSLESHSQKVSETQMCESNSSKETSLA. Residue lysine 577 forms a Glycyl lysine isopeptide (Lys-Gly) (interchain with G-Cter in SUMO2) linkage. Composition is skewed to basic and acidic residues over residues 579–623 and 653–670; these read SRNK…EKIV and SETEDTGRSLPSKKERSG. The interval 579–1301 is disordered; the sequence is SRNKDARTKG…ESTDGAEDAS (723 aa). Serine 653 is modified (phosphoserine). Residues 671–692 are compositionally biased toward basic residues; that stretch reads KSHRHKKKKKHKKSSKHKRKHK. Positions 693–707 are enriched in basic and acidic residues; the sequence is ADTEEKSSKAESGEK. The span at 708–720 shows a compositional bias: basic residues; it reads SKKRKKRKRKKNK. Residues 733–743 show a composition bias toward pro residues; it reads PEPPGSGSPAP. Residues serine 738, serine 740, and serine 758 each carry the phosphoserine modification. Basic and acidic residues predominate over residues 750-772; sequence AQDDSQRRSLPAEEGSSGKKDEG. Composition is skewed to basic residues over residues 799–809 and 852–867; these read AGTKRSSRSSH and SRSRSGRRHSSHRSSR. Over residues 868 to 896 the composition is skewed to low complexity; that stretch reads RSYSSSSDASSDQSCYSRQRSYSDDSYSD. Phosphoserine occurs at positions 911 and 914. Residues 919-928 show a composition bias toward basic residues; the sequence is SKHRSKRHKY. Residues serine 981, serine 1009, serine 1014, serine 1033, and serine 1035 each carry the phosphoserine modification. A compositionally biased stretch (basic and acidic residues) spans 1010-1027; sequence WGHESPEERHSGRRDFIR. Residues 1042-1059 show a composition bias toward basic and acidic residues; sequence GRGEGPGKKDDGRGDDSK. Residue serine 1081 is modified to Phosphoserine. Composition is skewed to basic and acidic residues over residues 1093 to 1108 and 1159 to 1171; these read LLEKIQSRKVERKPSV and KKCEESGLERGEE. Lysine 1105 participates in a covalent cross-link: Glycyl lysine isopeptide (Lys-Gly) (interchain with G-Cter in SUMO2). Serine 1107 bears the Phosphoserine mark. The residue at position 1175 (serine 1175) is a Phosphoserine.

The chain is G patch domain-containing protein 8 (GPATCH8) from Homo sapiens (Human).